Here is a 435-residue protein sequence, read N- to C-terminus: Tol-Pal system protein TolB (435 aa).

Positions 1 to 26 (MKIFSPIRLVLAIAALMSVFSAPAFA) are cleaved as a signal peptide.

It belongs to the TolB family. In terms of assembly, the Tol-Pal system is composed of five core proteins: the inner membrane proteins TolA, TolQ and TolR, the periplasmic protein TolB and the outer membrane protein Pal. They form a network linking the inner and outer membranes and the peptidoglycan layer.

It is found in the periplasm. Part of the Tol-Pal system, which plays a role in outer membrane invagination during cell division and is important for maintaining outer membrane integrity. This Agrobacterium fabrum (strain C58 / ATCC 33970) (Agrobacterium tumefaciens (strain C58)) protein is Tol-Pal system protein TolB.